A 721-amino-acid polypeptide reads, in one-letter code: Pre-mRNA-splicing ATP-dependent RNA helicase PRP28 (721 aa).

The disordered stretch occupies residues 12 to 134 (KKAADTAAAK…SAEDIEATLL (123 aa)). The span at 26 to 63 (PKAERERLAAEKAKKEEDDKKRKASEEEQKRKEEEQKW) shows a compositional bias: basic and acidic residues. Residues 64 to 77 (RSNGSSRPNESNGS) show a composition bias toward polar residues. Residues 88–104 (NDGRDDRERDRDRDQGR) are compositionally biased toward basic and acidic residues. A Q motif motif is present at residues 288 to 316 (RSWQESNLPQRLLNIVDDVGYKDPSPIQR). Positions 319-522 (IPIALQARDL…KKYLRRPAIV (204 aa)) constitute a Helicase ATP-binding domain. 332-339 (AVTGSGKT) contributes to the ATP binding site. The DEAD box motif lies at 445 to 448 (DEAD). The 164-residue stretch at 533 to 696 (TVEQRVEFVS…KVPEELRRHE (164 aa)) folds into the Helicase C-terminal domain. The disordered stretch occupies residues 685–721 (ISKVPEELRRHEAAQSKPVRGAKKDKDEGSGKGNWQH). Residues 688-698 (VPEELRRHEAA) are compositionally biased toward basic and acidic residues.

The protein belongs to the DEAD box helicase family. DDX23/PRP28 subfamily. In terms of assembly, component of the U5 snRNP complex.

It localises to the cytoplasm. The protein resides in the nucleus. It carries out the reaction ATP + H2O = ADP + phosphate + H(+). ATP-dependent RNA helicase involved in mRNA splicing. May destabilize the U1/5'-splice site duplex to permit an effective competition for the 5'-splice site by the U6 snRNA, resulting in the switch between U1 and U6 at the 5'-splice site. May also act to unwind the U4/U6 base-pairing interaction in the U4/U6/U5 snRNP, facilitating the first covalent step of splicing. The polypeptide is Pre-mRNA-splicing ATP-dependent RNA helicase PRP28 (PRP28) (Gibberella zeae (strain ATCC MYA-4620 / CBS 123657 / FGSC 9075 / NRRL 31084 / PH-1) (Wheat head blight fungus)).